Here is a 388-residue protein sequence, read N- to C-terminus: Oxytocin receptor (388 aa).

The segment at 1 to 32 (MEGTPAANWSVELDLGSGVPPGEEGNRTAGPP) is disordered. The Extracellular segment spans residues 1-38 (MEGTPAANWSVELDLGSGVPPGEEGNRTAGPPQRNEAL). 2 N-linked (GlcNAc...) asparagine glycosylation sites follow: N8 and N26. Residues 39 to 63 (ARVEVAVLCLILFLALSGNACVLLA) form a helical membrane-spanning segment. Residues 64–74 (LRTTRHKHSRL) lie on the Cytoplasmic side of the membrane. The chain crosses the membrane as a helical span at residues 75 to 97 (FFFMKHLSIADLVVAVFQVLPQL). The Extracellular segment spans residues 98–113 (LWDITFRFYGPDLLCR). C112 and C187 form a disulfide bridge. A helical transmembrane segment spans residues 114-135 (LVKYLQVVGMFASTYLLLLMSL). The Cytoplasmic portion of the chain corresponds to 136–154 (DRCLAICQPLRSLRRRTDR). The helical transmembrane segment at 155 to 175 (LAVLGTWLGCLVASAPQVHIF) threads the bilayer. Residues 176–202 (SLREVADGVFDCWAVFIQPWGPKAYVT) lie on the Extracellular side of the membrane. A helical membrane pass occupies residues 203–225 (WITLAVYIVPVIVLAACYGLISF). The Cytoplasmic portion of the chain corresponds to 226–274 (KIWQNLRLKTAAAAAAAEGNDAAGGAGRAALARVSSVKLISKAKIRTVK). A helical transmembrane segment spans residues 275–293 (MTFIIVLAFIVCWTPFFFV). Over 294 to 308 (QMWSVWDVNAPKEAS) the chain is Extracellular. A helical membrane pass occupies residues 309–331 (AFIIAMLLASLNSCCNPWIYMLF). Topologically, residues 332–388 (TGHLFHELVQRFFCCSARYLKGSRPGETSVSKKSNSSTFVLSRRSSSQRSCSQPSSA) are cytoplasmic. The tract at residues 354 to 388 (SRPGETSVSKKSNSSTFVLSRRSSSQRSCSQPSSA) is disordered. Phosphoserine occurs at positions 365 and 367. Residues 365–388 (SNSSTFVLSRRSSSQRSCSQPSSA) are compositionally biased toward low complexity.

The protein belongs to the G-protein coupled receptor 1 family. Vasopressin/oxytocin receptor subfamily.

The protein localises to the cell membrane. In terms of biological role, receptor for oxytocin. The activity of this receptor is mediated by G proteins which activate a phosphatidylinositol-calcium second messenger system. In Rattus norvegicus (Rat), this protein is Oxytocin receptor (Oxtr).